The primary structure comprises 151 residues: Dehydrin Rab16D (151 aa).

The interval 1 to 138 (MEYQGQHGGH…TADAGGEKKG (138 aa)) is disordered. The span at 39–51 (EPAREDKKTDGVL) shows a compositional bias: basic and acidic residues. Composition is skewed to low complexity over residues 90–105 (GNNQQQQQEHTTTTTG) and 117–132 (IATGAHGGTAATTADA).

This sequence belongs to the plant dehydrin family.

This is Dehydrin Rab16D (RAB16D) from Oryza sativa subsp. indica (Rice).